A 193-amino-acid chain; its full sequence is D-alanyl-D-alanine dipeptidase (193 aa).

Zn(2+) contacts are provided by His-98 and Asp-105. Residue Glu-162 is the Proton donor/acceptor of the active site. Position 165 (His-165) interacts with Zn(2+).

This sequence belongs to the peptidase M15D family. Zn(2+) serves as cofactor.

The protein localises to the cytoplasm. It carries out the reaction D-alanyl-D-alanine + H2O = 2 D-alanine. Its function is as follows. Catalyzes hydrolysis of the D-alanyl-D-alanine dipeptide. May have a role in cell-wall turnover. In Escherichia coli (strain K12), this protein is D-alanyl-D-alanine dipeptidase.